Consider the following 180-residue polypeptide: Segregation and condensation protein B (180 aa).

The protein belongs to the ScpB family. In terms of assembly, homodimer. Homodimerization may be required to stabilize the binding of ScpA to the Smc head domains. Component of a cohesin-like complex composed of ScpA, ScpB and the Smc homodimer, in which ScpA and ScpB bind to the head domain of Smc. The presence of the three proteins is required for the association of the complex with DNA.

It localises to the cytoplasm. Participates in chromosomal partition during cell division. May act via the formation of a condensin-like complex containing Smc and ScpA that pull DNA away from mid-cell into both cell halves. The sequence is that of Segregation and condensation protein B from Staphylococcus aureus (strain USA300).